We begin with the raw amino-acid sequence, 152 residues long: Snaclec agkisacutacin subunit A (152 aa).

The N-terminal stretch at 1 to 23 (MGRFIFVSFGLLVVFLSLSGTAA) is a signal peptide. The C-type lectin domain occupies 24–152 (DCSSGWSSYE…EQQDPFVCEA (129 aa)). 3 disulfides stabilise this stretch: Cys-25/Cys-36, Cys-53/Cys-150, and Cys-125/Cys-142. Ser-64, Glu-66, and Glu-70 together coordinate Ca(2+). Glu-151 provides a ligand contact to Ca(2+).

The protein belongs to the snaclec family. Heterodimer with subunit B of AaACP or agkisacutacin; disulfide-linked. Expressed by the venom gland.

The protein resides in the secreted. Functionally, anticoagulant protein which binds to the gamma-carboxyglutamic acid-domain regions of factors IX (F9) and factor X (F10) in the presence of calcium with a 1 to 1 stoichiometry. Also inhibits platelet aggregation by binding to platelet glycoprotein Ibalpha (GP1BA) and functioning as a blocker of von Willebrand factor (VWF). Is devoid of hemorrhagic and lethal activities. Possesses antithrombotic and thrombolytic activities. Also hydrolyzes the Aalpha-chain of fibrinogen (FGA). Does not affect the Bbeta-chain (FGB) and the gamma chain (FGG). This Deinagkistrodon acutus (Hundred-pace snake) protein is Snaclec agkisacutacin subunit A.